Reading from the N-terminus, the 887-residue chain is Golgin IMH1 (887 aa).

Disordered regions lie at residues 16-50, 142-214, 240-301, and 783-822; these read LAKGINEDTASEGQHGAGAQGGRREEGGSPYEELP, QESL…MKSQ, GASQ…SAGD, and LKMSKDMSSQSRHSSRSGSLVSPSSDNETGNSPRKISISS. Composition is skewed to basic and acidic residues over residues 37 to 50 and 145 to 210; these read GRREEGGSPYEELP and LEQR…HAAE. Positions 118–241 form a coiled coil; it reads AMLTEEIKRI…YKSTIQELGA (124 aa). Residues 240-254 show a composition bias toward polar residues; that stretch reads GASQATGEAQPSSEA. The segment covering 258 to 273 has biased composition (basic residues); it reads RGKKGKGKRGKGKKRV. Residues 299–788 adopt a coiled-coil conformation; sequence AGDEIIEAIE…LSTQLKMSKD (490 aa). Positions 788 to 807 are enriched in low complexity; that stretch reads DMSSQSRHSSRSGSLVSPSS. Polar residues predominate over residues 808 to 822; the sequence is DNETGNSPRKISISS. The region spanning 837-885 is the GRIP domain; that stretch reads EMESNEKLAYIRNVLLGFLEHREQRSQLLPVVSTLLQLSSHDEKRLLTS.

It localises to the cytoplasm. It is found in the golgi apparatus membrane. Involved in vesicular transport between an endosomal compartment and the Golgi apparatus. This Eremothecium gossypii (strain ATCC 10895 / CBS 109.51 / FGSC 9923 / NRRL Y-1056) (Yeast) protein is Golgin IMH1 (IMH1).